Here is a 430-residue protein sequence, read N- to C-terminus: Glutamyl-tRNA reductase (430 aa).

Substrate contacts are provided by residues 49–52, Ser109, 114–116, and Gln120; these read TCNR and EGQ. Cys50 serves as the catalytic Nucleophile. 189–194 provides a ligand contact to NADP(+); that stretch reads GAGKMA.

It belongs to the glutamyl-tRNA reductase family. Homodimer.

The catalysed reaction is (S)-4-amino-5-oxopentanoate + tRNA(Glu) + NADP(+) = L-glutamyl-tRNA(Glu) + NADPH + H(+). Its pathway is porphyrin-containing compound metabolism; protoporphyrin-IX biosynthesis; 5-aminolevulinate from L-glutamyl-tRNA(Glu): step 1/2. It participates in porphyrin-containing compound metabolism; chlorophyll biosynthesis. Catalyzes the NADPH-dependent reduction of glutamyl-tRNA(Glu) to glutamate 1-semialdehyde (GSA). In Crocosphaera subtropica (strain ATCC 51142 / BH68) (Cyanothece sp. (strain ATCC 51142)), this protein is Glutamyl-tRNA reductase.